The sequence spans 400 residues: Argininosuccinate synthase (400 aa).

An ATP-binding site is contributed by alanine 8–serine 16. L-citrulline is bound by residues tyrosine 87 and serine 92. Glycine 117 contributes to the ATP binding site. The L-aspartate site is built by threonine 119, asparagine 123, and aspartate 124. L-citrulline is bound at residue asparagine 123. L-citrulline-binding residues include arginine 127, serine 175, glutamate 259, and tyrosine 271.

It belongs to the argininosuccinate synthase family. Type 1 subfamily. As to quaternary structure, homotetramer.

It is found in the cytoplasm. It carries out the reaction L-citrulline + L-aspartate + ATP = 2-(N(omega)-L-arginino)succinate + AMP + diphosphate + H(+). Its pathway is amino-acid biosynthesis; L-arginine biosynthesis; L-arginine from L-ornithine and carbamoyl phosphate: step 2/3. This Frankia alni (strain DSM 45986 / CECT 9034 / ACN14a) protein is Argininosuccinate synthase.